The primary structure comprises 131 residues: MSAKTDEILESLKSLSLLEASELVKQIEEAFGVSAAASAGVVMAAPGAAAGGGGGEVAEEKTEFDVILESFDAAAKIKVLKAVRNATGLGLGDAKALVEAAPKPIKEGISKDEAEALKKEIEEVGGKVTLK.

This sequence belongs to the bacterial ribosomal protein bL12 family. In terms of assembly, homodimer. Part of the ribosomal stalk of the 50S ribosomal subunit. Forms a multimeric L10(L12)X complex, where L10 forms an elongated spine to which 2 to 4 L12 dimers bind in a sequential fashion. Binds GTP-bound translation factors.

In terms of biological role, forms part of the ribosomal stalk which helps the ribosome interact with GTP-bound translation factors. Is thus essential for accurate translation. This Parasynechococcus marenigrum (strain WH8102) protein is Large ribosomal subunit protein bL12.